We begin with the raw amino-acid sequence, 79 residues long: D-alanyl carrier protein (79 aa).

The Carrier domain maps to 1–77 (MDVKAEVIEI…KIVEGVTELR (77 aa)). Serine 35 carries the O-(pantetheine 4'-phosphoryl)serine modification.

It belongs to the DltC family. Post-translationally, 4'-phosphopantetheine is transferred from CoA to a specific serine of apo-DCP.

It localises to the cytoplasm. The protein operates within cell wall biogenesis; lipoteichoic acid biosynthesis. Carrier protein involved in the D-alanylation of lipoteichoic acid (LTA). The loading of thioester-linked D-alanine onto DltC is catalyzed by D-alanine--D-alanyl carrier protein ligase DltA. The DltC-carried D-alanyl group is further transferred to cell membrane phosphatidylglycerol (PG) by forming an ester bond, probably catalyzed by DltD. D-alanylation of LTA plays an important role in modulating the properties of the cell wall in Gram-positive bacteria, influencing the net charge of the cell wall. In Streptococcus thermophilus (strain CNRZ 1066), this protein is D-alanyl carrier protein.